Here is a 224-residue protein sequence, read N- to C-terminus: Octanoyltransferase (224 aa).

In terms of domain architecture, BPL/LPL catalytic spans 38 to 213 (SATVDELWWV…YLVRRLGYSA (176 aa)). Substrate-binding positions include 77 to 84 (RGGQVTYH), 144 to 146 (SLG), and 157 to 159 (GLS). The active-site Acyl-thioester intermediate is the Cys-175.

It belongs to the LipB family.

The protein localises to the cytoplasm. The catalysed reaction is octanoyl-[ACP] + L-lysyl-[protein] = N(6)-octanoyl-L-lysyl-[protein] + holo-[ACP] + H(+). Its pathway is protein modification; protein lipoylation via endogenous pathway; protein N(6)-(lipoyl)lysine from octanoyl-[acyl-carrier-protein]: step 1/2. Functionally, catalyzes the transfer of endogenously produced octanoic acid from octanoyl-acyl-carrier-protein onto the lipoyl domains of lipoate-dependent enzymes. Lipoyl-ACP can also act as a substrate although octanoyl-ACP is likely to be the physiological substrate. The sequence is that of Octanoyltransferase from Nitrosococcus oceani (strain ATCC 19707 / BCRC 17464 / JCM 30415 / NCIMB 11848 / C-107).